The following is a 132-amino-acid chain: Phosphoribosyl-AMP cyclohydrolase (132 aa).

D85 contributes to the Mg(2+) binding site. C86 lines the Zn(2+) pocket. Mg(2+) contacts are provided by D87 and D89. Zn(2+) contacts are provided by C102 and C109.

Belongs to the PRA-CH family. In terms of assembly, homodimer. It depends on Mg(2+) as a cofactor. Zn(2+) serves as cofactor.

It is found in the cytoplasm. It catalyses the reaction 1-(5-phospho-beta-D-ribosyl)-5'-AMP + H2O = 1-(5-phospho-beta-D-ribosyl)-5-[(5-phospho-beta-D-ribosylamino)methylideneamino]imidazole-4-carboxamide. The protein operates within amino-acid biosynthesis; L-histidine biosynthesis; L-histidine from 5-phospho-alpha-D-ribose 1-diphosphate: step 3/9. In terms of biological role, catalyzes the hydrolysis of the adenine ring of phosphoribosyl-AMP. This Frankia alni (strain DSM 45986 / CECT 9034 / ACN14a) protein is Phosphoribosyl-AMP cyclohydrolase.